The following is a 608-amino-acid chain: Glutamine--fructose-6-phosphate aminotransferase [isomerizing] (608 aa).

The active-site Nucleophile; for GATase activity is the cysteine 2. The region spanning 2 to 217 is the Glutamine amidotransferase type-2 domain; the sequence is CGIVGYIGDK…DHEIAIIKKD (216 aa). 2 SIS domains span residues 285 to 424 and 453 to 598; these read TKED…KKGT and VIQK…VDKP. Lysine 603 functions as the For Fru-6P isomerization activity in the catalytic mechanism.

As to quaternary structure, homodimer.

Its subcellular location is the cytoplasm. The catalysed reaction is D-fructose 6-phosphate + L-glutamine = D-glucosamine 6-phosphate + L-glutamate. In terms of biological role, catalyzes the first step in hexosamine metabolism, converting fructose-6P into glucosamine-6P using glutamine as a nitrogen source. This Caldanaerobacter subterraneus subsp. tengcongensis (strain DSM 15242 / JCM 11007 / NBRC 100824 / MB4) (Thermoanaerobacter tengcongensis) protein is Glutamine--fructose-6-phosphate aminotransferase [isomerizing].